Reading from the N-terminus, the 262-residue chain is Snake venom serine proteinase 9 (262 aa).

An N-terminal signal peptide occupies residues 1-18; that stretch reads MVLIRVLANLLILQLSYA. Residues 19-24 constitute a propeptide that is removed on maturation; the sequence is QKSSEL. The Peptidase S1 domain maps to 25–253; that stretch reads VIGGDECNID…HLDWIQSIIA (229 aa). Disulfide bonds link Cys-31/Cys-165, Cys-52/Cys-68, Cys-144/Cys-214, Cys-176/Cys-193, and Cys-204/Cys-229. Catalysis depends on His-67, which acts as the Charge relay system. A glycan (N-linked (GlcNAc...) asparagine) is linked at Asn-105. The active-site Charge relay system is Asp-112. Residue Ser-208 is the Charge relay system of the active site.

It belongs to the peptidase S1 family. Snake venom subfamily. Monomer. In terms of tissue distribution, expressed by the venom gland.

It is found in the secreted. Snake venom serine protease that may act in the hemostasis system of the prey. This is Snake venom serine proteinase 9 from Crotalus adamanteus (Eastern diamondback rattlesnake).